A 151-amino-acid polypeptide reads, in one-letter code: Abdominal ganglion neuropeptide L11 (151 aa).

Positions 1–25 (MPCTPNSHRLLLVTALCLLITSLFA) are cleaved as a signal peptide.

The protein resides in the secreted. The polypeptide is Abdominal ganglion neuropeptide L11 (Aplysia californica (California sea hare)).